Here is a 463-residue protein sequence, read N- to C-terminus: MAVDRKIRIAVVGGGPGGVIAALALSKSPNVEIDLYEAATAFGDIGLSLGMPWRPWRILRLLGLQGYLAALLPPDQIPKEDVTVPTIHYRKSDQAVGEDIFTCTSLSGYTRFRRSHFHAALLPHLPSNCKTYTSKRLVSYAEPSNASDPIVITFADGTTAECDVLVGADGIKSPTRASMYNYAADEAEKAGRSAEANDLRSKIRAKFSGVEVYRSVISAEQLRAAAPDHHAFRCPTQFLGKEKVRMPTYPIQSENSQFLNCALYICDYSREGEDYPEPWVTDVEAKDLRSSLPDWEPEAQAAVSCMGEVVSRWAICTLSPLPFFQRSRVVLLGDAAVRVTTPFSTFSSDHCQTLACYDELPRCRLRPGDDAYILSEILTHPAVTRDNVQKALEIYSEVRVPMSTHVLESSRRTGMDCALHDEVAAADLKSLGERMQQEMVWAWEWNPEDEKKKALDLVEERLV.

FAD-binding residues include E37, G50, and R114. The active site involves R200. Position 334 (D334) interacts with FAD.

This sequence belongs to the paxM FAD-dependent monooxygenase family.

The protein operates within mycotoxin biosynthesis. In terms of biological role, FAD-dependent monooxygenase; part of the gene cluster that mediates the biosynthesis of strobilurin A, an antifungal polyketide that contains a key beta-methoxyacrylate toxophore that targets the complex III of the mitochondrial electron transport chain. Strobilurin biosynthesis begins with construction of benzoyl CoA by step-wise elimination of ammonia from phenylalanine by the phenylalanine ammonia-lyase str11, oxygenation by str8 and retro-Claisen reaction to form benzoic acid, which is activated to its CoA thiolester benzoyl CoA by the dedicated CoA ligase str10. Benzoyl CoA forms the starter unit for the highly reducing polyketide synthase stpks1 that produces the polyketide prestrobilutin A. The FAD-dependent oxygenase str9 then catalyzes the key oxidative rearrangement responsible for the creation of the beta-methoxyacrylate toxophore. Str9 performs epoxidation of the 2,3 olefin of prestrobilutin A, followed by Meinwald rearrangement to furnish the aldehyde intermediate. Rapid enolization of the aldehyde intermediate would give the beta-methoxyacrylate skeleton and methylations catalyzed by str2 and str3 complete the synthesis and lead to the production of strobilurin A. The short-chain dehydrogenase stl2 and the dehydrogenase str4 play a role in the shunt pathway leading to the production of bolineol. The cluster encodes no obvious halogenase gene that could be involved in production of strobilurin B, nor any obvious dimethylallyl-transferase that could be involved in the production of strobilurin G. It is possible that unknown proteins encoded in, or near, the cluster (such as str1 or stl1) may form new classes of halogenases or dimethylally-transferases, or that the responsible genes are located elsewhere on the genome. Similarly, proteins encoded by str5/str6 hydrolases appear to have no chemical role in the biosynthesis of strobilurin A. Finally, no obvious self-resistance gene is found within the cluster. The chain is FAD-dependent monooxygenase str9 from Strobilurus tenacellus.